Reading from the N-terminus, the 341-residue chain is S-adenosylmethionine:tRNA ribosyltransferase-isomerase (341 aa).

Belongs to the QueA family. In terms of assembly, monomer.

The protein resides in the cytoplasm. The enzyme catalyses 7-aminomethyl-7-carbaguanosine(34) in tRNA + S-adenosyl-L-methionine = epoxyqueuosine(34) in tRNA + adenine + L-methionine + 2 H(+). Its pathway is tRNA modification; tRNA-queuosine biosynthesis. Transfers and isomerizes the ribose moiety from AdoMet to the 7-aminomethyl group of 7-deazaguanine (preQ1-tRNA) to give epoxyqueuosine (oQ-tRNA). The polypeptide is S-adenosylmethionine:tRNA ribosyltransferase-isomerase (Halothermothrix orenii (strain H 168 / OCM 544 / DSM 9562)).